The primary structure comprises 395 residues: Acetate kinase (395 aa).

Asn7 contributes to the Mg(2+) binding site. Position 14 (Lys14) interacts with ATP. Arg85 contributes to the substrate binding site. Asp142 serves as the catalytic Proton donor/acceptor. ATP-binding positions include 202–206 (HLGNG), 277–279 (DMR), and 325–329 (GIGEN). Glu378 contributes to the Mg(2+) binding site.

This sequence belongs to the acetokinase family. In terms of assembly, homodimer. Requires Mg(2+) as cofactor. The cofactor is Mn(2+).

It localises to the cytoplasm. The enzyme catalyses acetate + ATP = acetyl phosphate + ADP. Its pathway is metabolic intermediate biosynthesis; acetyl-CoA biosynthesis; acetyl-CoA from acetate: step 1/2. Catalyzes the formation of acetyl phosphate from acetate and ATP. Can also catalyze the reverse reaction. The chain is Acetate kinase from Deinococcus geothermalis (strain DSM 11300 / CIP 105573 / AG-3a).